Here is a 156-residue protein sequence, read N- to C-terminus: Small ribosomal subunit protein uS7 (156 aa).

This sequence belongs to the universal ribosomal protein uS7 family. Part of the 30S ribosomal subunit. Contacts proteins S9 and S11.

One of the primary rRNA binding proteins, it binds directly to 16S rRNA where it nucleates assembly of the head domain of the 30S subunit. Is located at the subunit interface close to the decoding center, probably blocks exit of the E-site tRNA. This chain is Small ribosomal subunit protein uS7, found in Nitrosospira multiformis (strain ATCC 25196 / NCIMB 11849 / C 71).